The chain runs to 547 residues: ATP synthase subunit alpha (547 aa).

Residue 173–180 (GDRQTGKT) participates in ATP binding.

Belongs to the ATPase alpha/beta chains family. F-type ATPases have 2 components, CF(1) - the catalytic core - and CF(0) - the membrane proton channel. CF(1) has five subunits: alpha(3), beta(3), gamma(1), delta(1), epsilon(1). CF(0) has three main subunits: a(1), b(2) and c(9-12). The alpha and beta chains form an alternating ring which encloses part of the gamma chain. CF(1) is attached to CF(0) by a central stalk formed by the gamma and epsilon chains, while a peripheral stalk is formed by the delta and b chains.

Its subcellular location is the cell membrane. The catalysed reaction is ATP + H2O + 4 H(+)(in) = ADP + phosphate + 5 H(+)(out). Its function is as follows. Produces ATP from ADP in the presence of a proton gradient across the membrane. The alpha chain is a regulatory subunit. The chain is ATP synthase subunit alpha from Thermobifida fusca (strain YX).